A 292-amino-acid polypeptide reads, in one-letter code: 33 kDa chaperonin (292 aa).

Disulfide bonds link cysteine 230/cysteine 232 and cysteine 263/cysteine 266.

The protein belongs to the HSP33 family. In terms of processing, under oxidizing conditions two disulfide bonds are formed involving the reactive cysteines. Under reducing conditions zinc is bound to the reactive cysteines and the protein is inactive.

The protein localises to the cytoplasm. Redox regulated molecular chaperone. Protects both thermally unfolding and oxidatively damaged proteins from irreversible aggregation. Plays an important role in the bacterial defense system toward oxidative stress. The protein is 33 kDa chaperonin of Escherichia coli O17:K52:H18 (strain UMN026 / ExPEC).